A 401-amino-acid chain; its full sequence is Protein IQ-DOMAIN 24 (401 aa).

Residues 1–48 (MGFFGRLFGSKKQEKATPNRRRWSFATRSSHPENDSSSHSSKRRGDED) form a disordered region. Residues 105–121 (EYKAAMKIQSAFRGYLA) form a calmodulin-binding region. IQ domains lie at 105–133 (EYKA…ALVK) and 134–156 (LQAL…RMQT). Composition is skewed to low complexity over residues 165–176 (RASRSSHVSDSS) and 278–287 (RSRTGSSSGG). 2 disordered regions span residues 165 to 186 (RASR…IPSS) and 258 to 296 (SPRK…PFTP).

This sequence belongs to the IQD family. Binds to multiple calmodulin (CaM) in the presence of Ca(2+) and CaM-like proteins.

It localises to the nucleus. It is found in the nuclear body. The protein resides in the cell membrane. In terms of biological role, may be involved in cooperative interactions with calmodulins or calmodulin-like proteins. Recruits calmodulin proteins to microtubules, thus being a potential scaffold in cellular signaling and trafficking. May associate with nucleic acids and regulate gene expression at the transcriptional or post-transcriptional level. This Arabidopsis thaliana (Mouse-ear cress) protein is Protein IQ-DOMAIN 24.